Here is a 521-residue protein sequence, read N- to C-terminus: GMP synthase [glutamine-hydrolyzing] (521 aa).

Positions 8–203 (KILILDFGAQ…VVDVCGCQTL (196 aa)) constitute a Glutamine amidotransferase type-1 domain. The Nucleophile role is filled by cysteine 85. Residues histidine 177 and glutamate 179 contribute to the active site. One can recognise a GMPS ATP-PPase domain in the interval 204–396 (WTAANIIDDQ…LGLPRTMVYR (193 aa)). 231–237 (SGGVDSS) is an ATP binding site.

Homodimer.

It carries out the reaction XMP + L-glutamine + ATP + H2O = GMP + L-glutamate + AMP + diphosphate + 2 H(+). Its pathway is purine metabolism; GMP biosynthesis; GMP from XMP (L-Gln route): step 1/1. Functionally, catalyzes the synthesis of GMP from XMP. This is GMP synthase [glutamine-hydrolyzing] from Stenotrophomonas maltophilia (strain R551-3).